A 233-amino-acid polypeptide reads, in one-letter code: Hydroxyacylglutathione hydrolase (233 aa).

Zn(2+)-binding residues include H52, H54, D56, H57, H108, D125, and H163.

The protein belongs to the metallo-beta-lactamase superfamily. Glyoxalase II family. Monomer. Zn(2+) is required as a cofactor.

The enzyme catalyses an S-(2-hydroxyacyl)glutathione + H2O = a 2-hydroxy carboxylate + glutathione + H(+). The protein operates within secondary metabolite metabolism; methylglyoxal degradation; (R)-lactate from methylglyoxal: step 2/2. Its function is as follows. Thiolesterase that catalyzes the hydrolysis of S-D-lactoyl-glutathione to form glutathione and D-lactic acid. This chain is Hydroxyacylglutathione hydrolase, found in Histophilus somni (strain 129Pt) (Haemophilus somnus).